We begin with the raw amino-acid sequence, 327 residues long: MHAPRFWSGGDGGWPARLLAPAAALYTLATARRMRGTGWRAPVPVLCCGNLTAGGAGKTTVALDLAARLVARGRHVHILTRGYGGRARGPLLVDPARHSAAEVGDEALLLARVAPCHVSADRAAGARAAVAAGADCLVMDDGFQNPGLRQDMGLLVIDGGSGFGNGHVLPAGPLREPVAQGCRRARAAILIGGDRTGALAHLPPALPVLRADLAMQEAAPMLAGRPAIAFAGIGRPDKFFDGLRAQGIRLAACLPFPDHHAYRPRDVRRLSAMAAVQGAVLLTTPKDAVRLPPAIRAQVRSVDVTLAWADPMAPERLLDMWLDKASS.

ATP is bound at residue 52–59 (TAGGAGKT).

It belongs to the LpxK family.

The catalysed reaction is a lipid A disaccharide + ATP = a lipid IVA + ADP + H(+). Its pathway is glycolipid biosynthesis; lipid IV(A) biosynthesis; lipid IV(A) from (3R)-3-hydroxytetradecanoyl-[acyl-carrier-protein] and UDP-N-acetyl-alpha-D-glucosamine: step 6/6. Its function is as follows. Transfers the gamma-phosphate of ATP to the 4'-position of a tetraacyldisaccharide 1-phosphate intermediate (termed DS-1-P) to form tetraacyldisaccharide 1,4'-bis-phosphate (lipid IVA). This Gluconacetobacter diazotrophicus (strain ATCC 49037 / DSM 5601 / CCUG 37298 / CIP 103539 / LMG 7603 / PAl5) protein is Tetraacyldisaccharide 4'-kinase.